The following is a 204-amino-acid chain: Inner membrane protein BB_0250 (204 aa).

5 helical membrane passes run 17–37 (IAYS…NVPI), 58–78 (ILIF…SFYI), 101–121 (YYYG…PFGV), 139–159 (FIVS…TLSF), and 172–192 (IKII…IIYV).

The protein belongs to the DedA family.

The protein localises to the cell inner membrane. Required for proper cell division and envelope integrity. The protein is Inner membrane protein BB_0250 of Borreliella burgdorferi (strain ATCC 35210 / DSM 4680 / CIP 102532 / B31) (Borrelia burgdorferi).